A 104-amino-acid polypeptide reads, in one-letter code: MAAKIRREDEVIVLTGKDKGKRGKVTRVLVTGKVVVEGINLVKKHTKPNPQLGITGGIVEKEAAIQVSNVAIFNPATGKADRVGFRFEDGKKVRFFKSNGELVK.

It belongs to the universal ribosomal protein uL24 family. In terms of assembly, part of the 50S ribosomal subunit.

Its function is as follows. One of two assembly initiator proteins, it binds directly to the 5'-end of the 23S rRNA, where it nucleates assembly of the 50S subunit. Functionally, one of the proteins that surrounds the polypeptide exit tunnel on the outside of the subunit. The chain is Large ribosomal subunit protein uL24 from Shewanella amazonensis (strain ATCC BAA-1098 / SB2B).